The following is a 202-amino-acid chain: UPF0056 membrane protein PH0214 (202 aa).

Helical transmembrane passes span 5–25 (ILSS…ILLV), 47–67 (IGFI…QDIF), 76–96 (VAGG…GGMV), 104–124 (ILAL…AAIT), 135–155 (IIVS…LMMI), and 174–194 (IIGL…AGGI).

This sequence belongs to the UPF0056 (MarC) family.

It localises to the cell membrane. The protein is UPF0056 membrane protein PH0214 of Pyrococcus horikoshii (strain ATCC 700860 / DSM 12428 / JCM 9974 / NBRC 100139 / OT-3).